Consider the following 209-residue polypeptide: Inorganic pyrophosphatase (209 aa).

Substrate contacts are provided by Lys38, Arg52, and Tyr64. Asp92, Asp97, and Asp130 together coordinate Mg(2+). Tyr167 lines the substrate pocket.

Belongs to the PPase family. In terms of assembly, homohexamer. Mg(2+) serves as cofactor.

Its subcellular location is the cytoplasm. It catalyses the reaction diphosphate + H2O = 2 phosphate + H(+). Its function is as follows. Catalyzes the hydrolysis of inorganic pyrophosphate (PPi) forming two phosphate ions. The chain is Inorganic pyrophosphatase from Chlamydia muridarum (strain MoPn / Nigg).